The primary structure comprises 616 residues: Chaperone protein HscA homolog (616 aa).

Belongs to the heat shock protein 70 family.

Functionally, chaperone involved in the maturation of iron-sulfur cluster-containing proteins. Has a low intrinsic ATPase activity which is markedly stimulated by HscB. This Histophilus somni (strain 2336) (Haemophilus somnus) protein is Chaperone protein HscA homolog.